Consider the following 210-residue polypeptide: Somatotropin (210 aa).

The signal sequence occupies residues 1-22 (MGQVFLLMPVLLVSCFLSQGAA). H38 contributes to the Zn(2+) binding site. C71 and C183 are joined by a disulfide. E192 contacts Zn(2+). Cysteines 200 and 208 form a disulfide.

Belongs to the somatotropin/prolactin family.

The protein resides in the secreted. Functionally, growth hormone plays an important role in growth control and is involved in the regulation of several anabolic processes. Implicated as an osmoregulatory substance important for seawater adaptation. The sequence is that of Somatotropin (gh) from Oncorhynchus keta (Chum salmon).